The sequence spans 226 residues: V-type proton ATPase subunit E 2 (226 aa).

This sequence belongs to the V-ATPase E subunit family. As to quaternary structure, V-ATPase is a heteromultimeric enzyme made up of two complexes: the ATP-hydrolytic V1 complex and the proton translocation V0 complex. The V1 complex consists of three catalytic AB heterodimers that form a heterohexamer, three peripheral stalks each consisting of EG heterodimers, one central rotor including subunits D and F, and the regulatory subunits C and H. The proton translocation complex V0 consists of the proton transport subunit a, a ring of proteolipid subunits c9c'', rotary subunit d, subunits e and f, and the accessory subunits ATP6AP1/Ac45 and ATP6AP2/PRR. Testis specific.

Its function is as follows. Subunit of the V1 complex of vacuolar(H+)-ATPase (V-ATPase), a multisubunit enzyme composed of a peripheral complex (V1) that hydrolyzes ATP and a membrane integral complex (V0) that translocates protons. V-ATPase is responsible for acidifying and maintaining the pH of intracellular compartments and in some cell types, is targeted to the plasma membrane, where it is responsible for acidifying the extracellular environment. This chain is V-type proton ATPase subunit E 2 (ATP6V1E2), found in Homo sapiens (Human).